The following is a 352-amino-acid chain: Biotin synthase (352 aa).

Positions Asn44–Gln262 constitute a Radical SAM core domain. 3 residues coordinate [4Fe-4S] cluster: Cys59, Cys63, and Cys66. Residues Cys103, Cys134, Cys194, and Arg266 each coordinate [2Fe-2S] cluster.

Belongs to the radical SAM superfamily. Biotin synthase family. In terms of assembly, homodimer. [4Fe-4S] cluster serves as cofactor. [2Fe-2S] cluster is required as a cofactor.

The catalysed reaction is (4R,5S)-dethiobiotin + (sulfur carrier)-SH + 2 reduced [2Fe-2S]-[ferredoxin] + 2 S-adenosyl-L-methionine = (sulfur carrier)-H + biotin + 2 5'-deoxyadenosine + 2 L-methionine + 2 oxidized [2Fe-2S]-[ferredoxin]. The protein operates within cofactor biosynthesis; biotin biosynthesis; biotin from 7,8-diaminononanoate: step 2/2. Functionally, catalyzes the conversion of dethiobiotin (DTB) to biotin by the insertion of a sulfur atom into dethiobiotin via a radical-based mechanism. This Pseudomonas savastanoi pv. phaseolicola (strain 1448A / Race 6) (Pseudomonas syringae pv. phaseolicola (strain 1448A / Race 6)) protein is Biotin synthase.